We begin with the raw amino-acid sequence, 222 residues long: Interleukin-12 subunit alpha (222 aa).

Residues 1–25 (MCPPRGLLLVAILVLLNHLDHLSLA) form the signal peptide. 3 cysteine pairs are disulfide-bonded: Cys-40/Cys-113, Cys-67/Cys-199, and Cys-88/Cys-126. N-linked (GlcNAc...) asparagine glycans are attached at residues Asn-42, Asn-96, and Asn-110.

The protein belongs to the IL-6 superfamily. In terms of assembly, heterodimer with IL12B; disulfide-linked. This heterodimer is known as interleukin IL-12. Heterodimer with EBI3/IL27B; not disulfide-linked. This heterodimer is known as interleukin IL-35. Interacts with NBR1; this interaction promotes IL-12 secretion.

Its subcellular location is the secreted. Its function is as follows. Heterodimerizes with IL12B to form the IL-12 cytokine or with EBI3/IL27B to form the IL-35 cytokine. IL-12 is primarily produced by professional antigen-presenting cells (APCs) such as B-cells and dendritic cells (DCs) as well as macrophages and granulocytes and regulates T-cell and natural killer-cell responses, induces the production of interferon-gamma (IFN-gamma), favors the differentiation of T-helper 1 (Th1) cells and is an important link between innate resistance and adaptive immunity. Mechanistically, exerts its biological effects through a receptor composed of IL12R1 and IL12R2 subunits. Binding to the receptor results in the rapid tyrosine phosphorylation of a number of cellular substrates including the JAK family kinases TYK2 and JAK2. In turn, recruited STAT4 gets phosphorylated and translocates to the nucleus where it regulates cytokine/growth factor responsive genes. As part of IL-35, plays essential roles in maintaining the immune homeostasis of the liver microenvironment and also functions as an immune-suppressive cytokine. Mediates biological events through unconventional receptors composed of IL12RB2 and gp130/IL6ST heterodimers or homodimers. Signaling requires the transcription factors STAT1 and STAT4, which form a unique heterodimer that binds to distinct DNA sites. In Equus caballus (Horse), this protein is Interleukin-12 subunit alpha (IL12A).